The primary structure comprises 1400 residues: RNA polymerase II-associated protein 1 (1400 aa).

Disordered stretches follow at residues 35–54 (KGSR…QDHR), 60–95 (DSLP…EERL), 161–215 (VSDN…GKGL), and 269–310 (REQT…DKLE). Composition is skewed to basic and acidic residues over residues 39–54 (RRGD…QDHR) and 85–95 (LPHDEDPEERL). Residues 269 to 282 (REQTETKATKEQNP) show a composition bias toward basic and acidic residues. Residue Thr-329 is modified to Phosphothreonine. A disordered region spans residues 504-539 (PSHDDKEDEDEDEELTKEKVNRKTPEEGSRPPPDLA). A compositionally biased stretch (acidic residues) spans 509–518 (KEDEDEDEEL). Residues 519-539 (TKEKVNRKTPEEGSRPPPDLA) show a composition bias toward basic and acidic residues.

This sequence belongs to the RPAP1 family. Part of an RNA polymerase II complex that contains POLR2A, POLR2B, POLR2C, POLR2D, POLR2E, POLR2F, POLR2G, POLR2H, POLR2I, POLR2J, POLR2K, POLR2L, RPAP1, FCP1 plus the general transcription factors TFIIB and TFIIF.

The protein localises to the nucleus. Its function is as follows. Forms an interface between the RNA polymerase II enzyme and chaperone/scaffolding protein, suggesting that it is required to connect RNA polymerase II to regulators of protein complex formation. Required for interaction of the RNA polymerase II complex with acetylated histone H3. The sequence is that of RNA polymerase II-associated protein 1 (Rpap1) from Rattus norvegicus (Rat).